A 397-amino-acid polypeptide reads, in one-letter code: Major outer membrane porin, serovar L3 (397 aa).

Positions methionine 1 to alanine 22 are cleaved as a signal peptide.

It belongs to the chlamydial porin (CP) (TC 1.B.2) family. In terms of assembly, part of a disulfide cross-linked outer membrane complex (COMC) composed of the major outer membrane porin (MOMP), the small cysteine-rich protein (OmcA) and the large cysteine-rich periplasmic protein (OmcB).

Its subcellular location is the cell outer membrane. Its function is as follows. In elementary bodies (EBs, the infectious stage, which is able to survive outside the host cell) provides the structural integrity of the outer envelope through disulfide cross-links with the small cysteine-rich protein and the large cysteine-rich periplasmic protein. It has been described in publications as the Sarkosyl-insoluble COMC (Chlamydia outer membrane complex), and serves as the functional equivalent of peptidoglycan. In terms of biological role, permits diffusion of specific solutes through the outer membrane. The protein is Major outer membrane porin, serovar L3 (ompA) of Chlamydia trachomatis.